The chain runs to 466 residues: Ribulose bisphosphate carboxylase large chain (466 aa).

Lysine 4 is subject to N6,N6,N6-trimethyllysine. Asparagine 113 and threonine 163 together coordinate substrate. The active-site Proton acceptor is the lysine 165. Lysine 167 lines the substrate pocket. Mg(2+) contacts are provided by lysine 191, aspartate 193, and glutamate 194. The residue at position 191 (lysine 191) is an N6-carboxylysine. The active-site Proton acceptor is the histidine 284. Arginine 285, histidine 317, and serine 369 together coordinate substrate.

It belongs to the RuBisCO large chain family. Type I subfamily. As to quaternary structure, heterohexadecamer of 8 large chains and 8 small chains; disulfide-linked. The disulfide link is formed within the large subunit homodimers. Mg(2+) is required as a cofactor. In terms of processing, the disulfide bond which can form in the large chain dimeric partners within the hexadecamer appears to be associated with oxidative stress and protein turnover.

It localises to the plastid. The protein resides in the chloroplast. The catalysed reaction is 2 (2R)-3-phosphoglycerate + 2 H(+) = D-ribulose 1,5-bisphosphate + CO2 + H2O. The enzyme catalyses D-ribulose 1,5-bisphosphate + O2 = 2-phosphoglycolate + (2R)-3-phosphoglycerate + 2 H(+). Its function is as follows. RuBisCO catalyzes two reactions: the carboxylation of D-ribulose 1,5-bisphosphate, the primary event in carbon dioxide fixation, as well as the oxidative fragmentation of the pentose substrate in the photorespiration process. Both reactions occur simultaneously and in competition at the same active site. This chain is Ribulose bisphosphate carboxylase large chain, found in Justicia odora (Water willow).